Reading from the N-terminus, the 533-residue chain is Glucose-6-phosphate isomerase (533 aa).

Catalysis depends on Glu-341, which acts as the Proton donor. Catalysis depends on residues His-372 and Lys-501.

The protein belongs to the GPI family.

The protein resides in the cytoplasm. It catalyses the reaction alpha-D-glucose 6-phosphate = beta-D-fructose 6-phosphate. The protein operates within carbohydrate biosynthesis; gluconeogenesis. Its pathway is carbohydrate degradation; glycolysis; D-glyceraldehyde 3-phosphate and glycerone phosphate from D-glucose: step 2/4. In terms of biological role, catalyzes the reversible isomerization of glucose-6-phosphate to fructose-6-phosphate. The sequence is that of Glucose-6-phosphate isomerase from Cereibacter sphaeroides (strain KD131 / KCTC 12085) (Rhodobacter sphaeroides).